The primary structure comprises 349 residues: Arginine kinase (349 aa).

One can recognise a Phosphagen kinase N-terminal domain in the interval 3 to 85 (DLAELWEKVS…LGPVILDYHK (83 aa)). 58-62 (GVGVY) is a substrate binding site. The Phosphagen kinase C-terminal domain maps to 113–349 (WIVSTRVRVG…EEIIKLEKAA (237 aa)). ATP contacts are provided by residues 116–120 (STRVR) and H179. Position 219 (E219) interacts with substrate. R223 is a binding site for ATP. C265 contributes to the substrate binding site. Residues 274 to 278 (RASVH) and 302 to 307 (RGIHGE) each bind ATP. E307 lines the substrate pocket.

This sequence belongs to the ATP:guanido phosphotransferase family.

The catalysed reaction is L-arginine + ATP = N(omega)-phospho-L-arginine + ADP + H(+). The chain is Arginine kinase from Liolophura japonica (Chiton).